The primary structure comprises 105 residues: Large ribosomal subunit protein mL49 (105 aa).

The N-terminal 15 residues, 1–15, are a transit peptide targeting the mitochondrion; it reads MRSSLKPVLSNLRFN.

Belongs to the mitochondrion-specific ribosomal protein mL49 family. Component of the mitochondrial large ribosomal subunit (mt-LSU). Mature yeast 74S mitochondrial ribosomes consist of a small (37S) and a large (54S) subunit. The 37S small subunit contains a 15S ribosomal RNA (15S mt-rRNA) and at least 32 different proteins. The 54S large subunit contains a 21S rRNA (21S mt-rRNA) and at least 45 different proteins.

The protein localises to the mitochondrion. Its function is as follows. Component of the mitochondrial ribosome (mitoribosome), a dedicated translation machinery responsible for the synthesis of mitochondrial genome-encoded proteins, including at least some of the essential transmembrane subunits of the mitochondrial respiratory chain. The mitoribosomes are attached to the mitochondrial inner membrane and translation products are cotranslationally integrated into the membrane. The protein is Large ribosomal subunit protein mL49 (img2) of Schizosaccharomyces pombe (strain 972 / ATCC 24843) (Fission yeast).